The sequence spans 289 residues: Eukaryotic translation initiation factor 3 subunit G (289 aa).

Positions 1–33 (MSRPTKADWADDEEFDDPSALPPQQITTNKDGT) are disordered. The region spanning 209-287 (ATLRVTNVSE…LILRVEFAKR (79 aa)) is the RRM domain.

It belongs to the eIF-3 subunit G family. In terms of assembly, component of the eukaryotic translation initiation factor 3 (eIF-3) complex.

The protein resides in the cytoplasm. Its function is as follows. RNA-binding component of the eukaryotic translation initiation factor 3 (eIF-3) complex, which is involved in protein synthesis of a specialized repertoire of mRNAs and, together with other initiation factors, stimulates binding of mRNA and methionyl-tRNAi to the 40S ribosome. The eIF-3 complex specifically targets and initiates translation of a subset of mRNAs involved in cell proliferation. This subunit can bind 18S rRNA. This Emericella nidulans (strain FGSC A4 / ATCC 38163 / CBS 112.46 / NRRL 194 / M139) (Aspergillus nidulans) protein is Eukaryotic translation initiation factor 3 subunit G (tif35).